Reading from the N-terminus, the 417-residue chain is Tryptophan decarboxylase (417 aa).

Lys263 is modified (N6-(pyridoxal phosphate)lysine).

It belongs to the group II decarboxylase family. Pyridoxal 5'-phosphate serves as cofactor.

It is found in the cytoplasm. The enzyme catalyses L-tryptophan + H(+) = tryptamine + CO2. Its activity is regulated as follows. Inhibited by (S)-alpha-fluoromethyltryptophan. Its function is as follows. Catalyzes the decarboxylation of tryptophan to tryptamine. Tryptamine is a neurotransmitter that induces the release of serotonin, which is suggested to modulate gastrointestinal motility. Therefore, the tryptophan decarboxylase from the gut bacteria Clostridium sporogenes (strain ATCC 15579) may influence host brain and behavior. Has weak activity with tyrosine. Activity against phenylalanine is undetectable. This chain is Tryptophan decarboxylase, found in Clostridium sporogenes (strain ATCC 15579).